The sequence spans 297 residues: MTPNNNVMFDDASVMWIDADYIYQNSKMPLSTFQQLLFSIPSKHRKMINDIGNPACNPPSCSFPPSNSTVKYMVDIYGAAVLALRCPSLFSDQLLTTFTANNYLSYCNRQRPCPQPPCPQPPFDCAQTQILDALEKLARQSDLVVNSLNQISLNQSNQFLELSNTLNTVRAQNAQILAALETTKDAILTRLNALVDDIKAALPDQSAQLQELADKLLDAINSVAQTLRGEMNNTNSILTNLASSITNINSTLNNLLAAIEGIGGDGGGLGDADRQALNEVLSLVTEIRNILMGTARK.

The protein belongs to the baculoviridae PE family.

It localises to the virion membrane. Major component of the polyhedra envelope. The chain is Polyhedral envelope protein from Orgyia pseudotsugata (Douglas-fir tussock moth).